The following is a 160-amino-acid chain: Dr hemagglutinin structural subunit (160 aa).

The first 21 residues, 1–21, serve as a signal peptide directing secretion; that stretch reads MKKLAIMAAASMVFAVSSAHA. The receptor-binding stretch occupies residues 22 to 75; that stretch reads GFTPSGTTGTTKLTVTEECQVRVGDLTVAKTRGQLTDAAPIGPVTVQALGCDAR.

This sequence belongs to the Dr-adhesin family.

It is found in the fimbrium. In terms of biological role, hemagglutinins of uropathogenic E.coli mediate adherence to the upper urinary tract. These adhesins bind to the Dr blood group antigen and also agglutinate human erythrocytes in the presence of D-mannose (mannose-resistant hemagglutination (MRHA)). This is Dr hemagglutinin structural subunit (draA) from Escherichia coli.